A 418-amino-acid chain; its full sequence is Isocitrate dehydrogenase [NADP] (418 aa).

Thr-106 contributes to the NADP(+) binding site. Residues Ser-115, Asn-117, Arg-121, Arg-131, and Arg-155 each contribute to the D-threo-isocitrate site. The residue at position 115 (Ser-115) is a Phosphoserine. Thr-193 is subject to Phosphothreonine. Asp-309 provides a ligand contact to Mg(2+). NADP(+) contacts are provided by residues His-341–Tyr-347, Asn-354, Tyr-393, and Arg-397.

Belongs to the isocitrate and isopropylmalate dehydrogenases family. In terms of assembly, homodimer. Mg(2+) serves as cofactor. It depends on Mn(2+) as a cofactor.

The protein resides in the secreted. It catalyses the reaction D-threo-isocitrate + NADP(+) = 2-oxoglutarate + CO2 + NADPH. Functionally, catalyzes the oxidative decarboxylation of isocitrate to 2-oxoglutarate and carbon dioxide with the concomitant reduction of NADP(+). This chain is Isocitrate dehydrogenase [NADP] (icd), found in Pseudomonas aeruginosa (strain UCBPP-PA14).